The following is a 563-amino-acid chain: GTPase Obg (563 aa).

The region spanning Ser2 to Ile168 is the Obg domain. An OBG-type G domain is found at Ala169–His349. GTP contacts are provided by residues Gly175–Ser182, Phe200–Val204, Asp221–Gly224, Asn301–Asp304, and Ser330–Ala332. Residues Ser182 and Thr202 each coordinate Mg(2+). The 87-residue stretch at Asp383 to Pro469 folds into the OCT domain. Residues Arg529–Glu563 are disordered.

The protein belongs to the TRAFAC class OBG-HflX-like GTPase superfamily. OBG GTPase family. In terms of assembly, monomer. Mg(2+) serves as cofactor.

Its subcellular location is the cytoplasm. Functionally, an essential GTPase which binds GTP, GDP and possibly (p)ppGpp with moderate affinity, with high nucleotide exchange rates and a fairly low GTP hydrolysis rate. Plays a role in control of the cell cycle, stress response, ribosome biogenesis and in those bacteria that undergo differentiation, in morphogenesis control. The polypeptide is GTPase Obg (Bifidobacterium longum (strain NCC 2705)).